A 356-amino-acid polypeptide reads, in one-letter code: 16-methoxy-2,3-dihydro-3-hydroxytabersonine synthase (356 aa).

7 residues coordinate Zn(2+): C49, H71, C102, C105, C108, C116, and C162. 187 to 192 (GLGAVG) is a binding site for NAD(+).

It belongs to the zinc-containing alcohol dehydrogenase family. Zn(2+) serves as cofactor. As to expression, expressed in leaf epidermis.

It carries out the reaction (3R)-3-hydroxy-16-methoxy-2,3-dihydrotabersonine + A = (3R)-1,2-didehydro-3-hydroxy-16-methoxy-2,3-dihydrotabersonine + AH2. The enzyme catalyses (3R)-3-hydroxy-2,3-dihydrotabersonine + A = (3R)-1,2-didehydro-3-hydroxy-2,3-dihydrotabersonine + AH2. It participates in alkaloid biosynthesis; vindoline biosynthesis. In terms of biological role, converts the unstable imine alcohols produced by CYP71D1V2/T3O into 3-hydroxy-16-methoxy-2,3-dihydrotabersonine or 3-hydroxy-2,3-dihydrotabersonine. The chain is 16-methoxy-2,3-dihydro-3-hydroxytabersonine synthase from Catharanthus roseus (Madagascar periwinkle).